Here is a 790-residue protein sequence, read N- to C-terminus: Cadherin-6 (790 aa).

The first 18 residues, 1 to 18 (MRTYRYFLLLFWVGQPYP), serve as a signal peptide directing secretion. A propeptide spanning residues 19-53 (TFSTPLSKRTSGFPAKKRTLELSGNSKNELSRSKR) is cleaved from the precursor. 5 consecutive Cadherin domains span residues 54-159 (SWMW…EPIF), 160-268 (TKEV…PPRF), 269-383 (PQST…PPVF), 384-486 (SKLA…DNPP), and 487-608 (EFAE…LVHP). Residues 54–615 (SWMWNQFFLL…VHPTGLSTGA (562 aa)) lie on the Extracellular side of the membrane. N-linked (GlcNAc...) asparagine glycosylation occurs at N255. Residues 261 to 291 (VNDNPPRFPQSTYQFKTPESSPPGTPIGRIK) form a disordered region. Polar residues predominate over residues 269–279 (PQSTYQFKTPE). 4 N-linked (GlcNAc...) asparagine glycosylation sites follow: N399, N437, N455, and N536. A helical transmembrane segment spans residues 616–636 (LIAILLCIVTLLVTVVLFAAL). The Cytoplasmic portion of the chain corresponds to 637 to 790 (RRQRKKEPLI…YGGVDSDKDS (154 aa)). A phosphoserine mark is found at S786 and S790.

Its subcellular location is the cell membrane. Functionally, cadherins are calcium-dependent cell adhesion proteins. They preferentially interact with themselves in a homophilic manner in connecting cells; cadherins may thus contribute to the sorting of heterogeneous cell types. The chain is Cadherin-6 (CDH6) from Bos taurus (Bovine).